Here is a 428-residue protein sequence, read N- to C-terminus: Trigger factor (428 aa).

One can recognise a PPIase FKBP-type domain in the interval 166 to 250; sequence GDIVTFDFKG…IKNIKEKILP (85 aa).

Belongs to the FKBP-type PPIase family. Tig subfamily.

It localises to the cytoplasm. It carries out the reaction [protein]-peptidylproline (omega=180) = [protein]-peptidylproline (omega=0). In terms of biological role, involved in protein export. Acts as a chaperone by maintaining the newly synthesized protein in an open conformation. Functions as a peptidyl-prolyl cis-trans isomerase. This is Trigger factor from Mycoplasma mycoides subsp. mycoides SC (strain CCUG 32753 / NCTC 10114 / PG1).